The primary structure comprises 941 residues: Protocadherin alpha-12 (941 aa).

Residues 1–29 form the signal peptide; the sequence is MVIIGPRGPGSQRLLLSLLLLAAWEVGSG. Cadherin domains lie at 30 to 133, 134 to 242, 243 to 350, 351 to 455, 456 to 565, and 581 to 678; these read QLHY…PPVF, RERE…GPAF, DKPS…VPEV, MVTS…APAF, AQPE…APAL, and VPRS…APKT. The Extracellular portion of the chain corresponds to 30–697; it reads QLHYSVYEEA…DPEAALVDIN (668 aa). 2 N-linked (GlcNAc...) asparagine glycosylation sites follow: N257 and N265. N548 is a glycosylation site (N-linked (GlcNAc...) asparagine). The helical transmembrane segment at 698–718 threads the bilayer; that stretch reads VYLIIAICAVSSLLVLTLLLY. Topologically, residues 719–941 are cytoplasmic; the sequence is TALRCSAPPT…GNSTTDNSDQ (223 aa). PXXP repeat units follow at residues 734–737, 790–793, 823–826, 863–866, and 882–885; these read PGKP, PRQP, PGGP, GPGN, and PGSP. A 5 X 4 AA repeats of P-X-X-P region spans residues 734–885; the sequence is PGKPTLVCSS…PDKFIIPGSP (152 aa). The disordered stretch occupies residues 818 to 941; that stretch reads ILRAGPGGPD…GNSTTDNSDQ (124 aa). A compositionally biased stretch (basic and acidic residues) spans 900 to 914; that stretch reads DKSDFITFGKKEETK.

The protein localises to the cell membrane. Potential calcium-dependent cell-adhesion protein. May be involved in the establishment and maintenance of specific neuronal connections in the brain. This Homo sapiens (Human) protein is Protocadherin alpha-12 (PCDHA12).